A 236-amino-acid chain; its full sequence is Phosphoribosylaminoimidazole-succinocarboxamide synthase (236 aa).

Belongs to the SAICAR synthetase family.

The enzyme catalyses 5-amino-1-(5-phospho-D-ribosyl)imidazole-4-carboxylate + L-aspartate + ATP = (2S)-2-[5-amino-1-(5-phospho-beta-D-ribosyl)imidazole-4-carboxamido]succinate + ADP + phosphate + 2 H(+). Its pathway is purine metabolism; IMP biosynthesis via de novo pathway; 5-amino-1-(5-phospho-D-ribosyl)imidazole-4-carboxamide from 5-amino-1-(5-phospho-D-ribosyl)imidazole-4-carboxylate: step 1/2. The chain is Phosphoribosylaminoimidazole-succinocarboxamide synthase from Hahella chejuensis (strain KCTC 2396).